A 187-amino-acid chain; its full sequence is Elongation factor P (187 aa).

It belongs to the elongation factor P family.

It is found in the cytoplasm. The protein operates within protein biosynthesis; polypeptide chain elongation. Involved in peptide bond synthesis. Stimulates efficient translation and peptide-bond synthesis on native or reconstituted 70S ribosomes in vitro. Probably functions indirectly by altering the affinity of the ribosome for aminoacyl-tRNA, thus increasing their reactivity as acceptors for peptidyl transferase. The chain is Elongation factor P from Corynebacterium glutamicum (strain R).